Consider the following 501-residue polypeptide: Glycerol kinase (501 aa).

Position 14 (threonine 14) interacts with ADP. Residues threonine 14, threonine 15, and serine 16 each coordinate ATP. Threonine 14 contacts sn-glycerol 3-phosphate. An ADP-binding site is contributed by arginine 18. Residues arginine 84, glutamate 85, and tyrosine 136 each coordinate sn-glycerol 3-phosphate. The glycerol site is built by arginine 84, glutamate 85, and tyrosine 136. Histidine 231 carries the phosphohistidine; by HPr modification. Residue aspartate 245 participates in sn-glycerol 3-phosphate binding. Positions 245 and 246 each coordinate glycerol. Residues threonine 267 and glycine 310 each coordinate ADP. ATP-binding residues include threonine 267, glycine 310, glutamine 314, and glycine 411. Glycine 411 and asparagine 415 together coordinate ADP.

It belongs to the FGGY kinase family. As to quaternary structure, homotetramer and homodimer (in equilibrium). Post-translationally, the phosphoenolpyruvate-dependent sugar phosphotransferase system (PTS), including enzyme I, and histidine-containing protein (HPr) are required for the phosphorylation of His-231, which leads to the activation of the enzyme.

It carries out the reaction glycerol + ATP = sn-glycerol 3-phosphate + ADP + H(+). It functions in the pathway polyol metabolism; glycerol degradation via glycerol kinase pathway; sn-glycerol 3-phosphate from glycerol: step 1/1. Activated by phosphorylation and inhibited by fructose 1,6-bisphosphate (FBP). Functionally, key enzyme in the regulation of glycerol uptake and metabolism. Catalyzes the phosphorylation of glycerol to yield sn-glycerol 3-phosphate. The polypeptide is Glycerol kinase (Enterococcus faecalis (strain ATCC 700802 / V583)).